The chain runs to 302 residues: Late embryogenesis abundant protein D-29 (302 aa).

Disordered regions lie at residues 25–93 (HMPS…AKEY), 168–193 (VKNAAKGKSSEMRQATTEKARELADS), and 205–302 (AKEK…NHKN). Composition is skewed to basic and acidic residues over residues 34 to 70 (RDYSKLKTKTEEATDEHHSRTQQAKDELKSKADHAAN) and 79 to 93 (AKDRASEVGKEAKEY). Basic and acidic residues predominate over residues 205 to 286 (AKEKVRDMAD…KAEETIESAK (82 aa)).

Belongs to the LEA type 1 family.

Functionally, LEA protein are late embryonic proteins abundant in higher plant seed embryos. There are two subsets of LEA proteins (5a and 5b), the first ones are expressed when the cotyledon weight reach 80 mg and the second set are expressed above 100 mg. The function of those proteins is not known. The sequence is that of Late embryogenesis abundant protein D-29 from Gossypium hirsutum (Upland cotton).